Here is a 110-residue protein sequence, read N- to C-terminus: Nucleoid-associated protein Tola_2216 (110 aa).

It belongs to the YbaB/EbfC family. In terms of assembly, homodimer.

It localises to the cytoplasm. Its subcellular location is the nucleoid. Binds to DNA and alters its conformation. May be involved in regulation of gene expression, nucleoid organization and DNA protection. In Tolumonas auensis (strain DSM 9187 / NBRC 110442 / TA 4), this protein is Nucleoid-associated protein Tola_2216.